Reading from the N-terminus, the 306-residue chain is Agmatinase (306 aa).

Residues histidine 126, aspartate 149, histidine 151, aspartate 153, aspartate 230, and aspartate 232 each coordinate Mn(2+).

It belongs to the arginase family. Agmatinase subfamily. Requires Mn(2+) as cofactor.

It catalyses the reaction agmatine + H2O = urea + putrescine. It participates in amine and polyamine biosynthesis; putrescine biosynthesis via agmatine pathway; putrescine from agmatine: step 1/1. Its function is as follows. Catalyzes the formation of putrescine from agmatine. The chain is Agmatinase from Klebsiella pneumoniae (strain 342).